The following is a 183-amino-acid chain: Ferritin heavy polypeptide-like 17 (183 aa).

The 150-residue stretch at 11 to 160 folds into the Ferritin-like diiron domain; it reads QKYDTNCDAA…GYVSNLRKIC (150 aa). Fe cation-binding residues include E28, H66, E108, and Q142.

The protein belongs to the ferritin family. As to expression, testis specific. Also expressed in several cancers.

The sequence is that of Ferritin heavy polypeptide-like 17 (FTHL17) from Homo sapiens (Human).